We begin with the raw amino-acid sequence, 328 residues long: Mitochondrial GTPase 1 (328 aa).

The region spanning 10–199 (KTTLKRLRDS…MVDTPGIMLP (190 aa)) is the CP-type G domain. GTP is bound by residues 57–60 (NKCD), 143–148 (NVGKSS), and Gly195.

This sequence belongs to the TRAFAC class YlqF/YawG GTPase family. MTG1 subfamily.

The protein resides in the mitochondrion inner membrane. Functionally, mitochondrial GTPase involved in assembly of the large ribosomal subunit. Plays a role in expression of the mitochondrial translational machinery. This chain is Mitochondrial GTPase 1, found in Schizosaccharomyces japonicus (strain yFS275 / FY16936) (Fission yeast).